The chain runs to 207 residues: Urease accessory protein UreG (207 aa).

14–21 (GPVGSGKT) serves as a coordination point for GTP.

It belongs to the SIMIBI class G3E GTPase family. UreG subfamily. As to quaternary structure, homodimer. UreD, UreF and UreG form a complex that acts as a GTP-hydrolysis-dependent molecular chaperone, activating the urease apoprotein by helping to assemble the nickel containing metallocenter of UreC. The UreE protein probably delivers the nickel.

The protein resides in the cytoplasm. In terms of biological role, facilitates the functional incorporation of the urease nickel metallocenter. This process requires GTP hydrolysis, probably effectuated by UreG. The polypeptide is Urease accessory protein UreG (Pseudomonas putida (strain GB-1)).